The sequence spans 127 residues: uncharacterized protein (127 aa).

The first 16 residues, 1–16, serve as a signal peptide directing secretion; the sequence is MIKKIIFGIAILLSLS. Cysteine 17 carries N-palmitoyl cysteine lipidation. A lipid anchor (S-diacylglycerol cysteine) is attached at cysteine 17. Residues 56–101 adopt a coiled-coil conformation; that stretch reads EVRKEIQEYRVEIVDINKKKRELYNSLSKEAQNFLAEQQKYKQKLS. The disordered stretch occupies residues 101-127; sequence SISKLPTEDDSPNNTANSKDNKDTDTK.

It is found in the cell membrane. This is an uncharacterized protein from Rickettsia felis (strain ATCC VR-1525 / URRWXCal2) (Rickettsia azadi).